The primary structure comprises 565 residues: Arginine--tRNA ligase (565 aa).

Positions 120-130 (PNIAKPFHVGH) match the 'HIGH' region motif.

Belongs to the class-I aminoacyl-tRNA synthetase family. As to quaternary structure, monomer.

The protein resides in the cytoplasm. It carries out the reaction tRNA(Arg) + L-arginine + ATP = L-arginyl-tRNA(Arg) + AMP + diphosphate. The sequence is that of Arginine--tRNA ligase from Clostridium perfringens (strain 13 / Type A).